Here is a 562-residue protein sequence, read N- to C-terminus: Beta-hexosaminidase (562 aa).

An N-terminal signal peptide occupies residues 1 to 22; the sequence is MVLDKMIIFHLLLWLCNVVVHA. Asn38, Asn52, Asn111, Asn337, Asn382, Asn396, and Asn463 each carry an N-linked (GlcNAc...) asparagine glycan.

The protein belongs to the glycosyl hydrolase 20 family.

It catalyses the reaction Hydrolysis of terminal non-reducing N-acetyl-D-hexosamine residues in N-acetyl-beta-D-hexosaminides.. Functionally, has a broad substrate specificity. The sequence is that of Beta-hexosaminidase (HEX1) from Candida albicans (Yeast).